The sequence spans 207 residues: Interleukin-6 (207 aa).

The signal sequence occupies residues 1 to 18 (MKFFSIASLGLLLVVATA). A disordered region spans residues 26-47 (REDGENSVTRNKPTRASSGKTR). Over residues 31–44 (NSVTRNKPTRASSG) the composition is skewed to polar residues. C65 and C71 are joined by a disulfide. The residue at position 74 (S74) is a Phosphoserine. C94 and C104 form a disulfide bridge.

The protein belongs to the IL-6 superfamily. As to quaternary structure, component of a hexamer of two molecules each of IL6, IL6R and IL6ST; first binds to IL6R to associate with the signaling subunit IL6ST. Interacts with IL6R (via the N-terminal ectodomain); this interaction may be affected by IL6R-binding with SORL1, hence decreasing IL6 cis signaling. Interacts with SORL1 (via the N-terminal ectodomain); this interaction leads to IL6 internalization and lysosomal degradation. May form a trimeric complex with the soluble SORL1 ectodomain and soluble IL6R receptor; this interaction might stabilize circulating IL6, hence promoting IL6 trans signaling.

The protein localises to the secreted. Its function is as follows. Cytokine with a wide variety of biological functions in immunity, tissue regeneration, and metabolism. Binds to IL6R, then the complex associates to the signaling subunit IL6ST/gp130 to trigger the intracellular IL6-signaling pathway. The interaction with the membrane-bound IL6R and IL6ST stimulates 'classic signaling', whereas the binding of IL6 and soluble IL6R to IL6ST stimulates 'trans-signaling'. Alternatively, 'cluster signaling' occurs when membrane-bound IL6:IL6R complexes on transmitter cells activate IL6ST receptors on neighboring receiver cells. In terms of biological role, IL6 is a potent inducer of the acute phase response. Rapid production of IL6 contributes to host defense during infection and tissue injury, but excessive IL6 synthesis is involved in disease pathology. In the innate immune response, is synthesized by myeloid cells, such as macrophages and dendritic cells, upon recognition of pathogens through toll-like receptors (TLRs) at the site of infection or tissue injury. In the adaptive immune response, is required for the differentiation of B cells into immunoglobulin-secreting cells. Plays a major role in the differentiation of CD4(+) T cell subsets. Essential factor for the development of T follicular helper (Tfh) cells that are required for the induction of germinal-center formation. Required to drive naive CD4(+) T cells to the Th17 lineage. Also required for proliferation of myeloma cells and the survival of plasmablast cells. Acts as an essential factor in bone homeostasis and on vessels directly or indirectly by induction of VEGF, resulting in increased angiogenesis activity and vascular permeability. Induces, through 'trans-signaling' and synergistically with IL1B and TNF, the production of VEGF. Involved in metabolic controls, is discharged into the bloodstream after muscle contraction increasing lipolysis and improving insulin resistance. 'Trans-signaling' in central nervous system also regulates energy and glucose homeostasis. Mediates, through GLP-1, crosstalk between insulin-sensitive tissues, intestinal L cells and pancreatic islets to adapt to changes in insulin demand. Also acts as a myokine. Plays a protective role during liver injury, being required for maintenance of tissue regeneration. Also has a pivotal role in iron metabolism by regulating HAMP/hepcidin expression upon inflammation or bacterial infection. Through activation of IL6ST-YAP-NOTCH pathway, induces inflammation-induced epithelial regeneration. This Marmota monax (Woodchuck) protein is Interleukin-6 (IL6).